Here is a 330-residue protein sequence, read N- to C-terminus: Cyclic AMP receptor-like protein E (330 aa).

The Extracellular segment spans residues 1–10 (MLSLSSYVLN). A helical transmembrane segment spans residues 11–31 (LVGSILCLIGCLFIIGHFFWI). Residues 32–40 (PLLRTSLSR) lie on the Cytoplasmic side of the membrane. The chain crosses the membrane as a helical span at residues 41–61 (IIIYPTFILLLYDMVSFPSFI). The Extracellular portion of the chain corresponds to 62 to 85 (SKTADLYIERSTIICNFQEAIIQY). A helical membrane pass occupies residues 86–106 (LILSNFIWSVCISVNLLYLCF). Over 107 to 116 (SPNKNLKKNE) the chain is Cytoplasmic. A helical transmembrane segment spans residues 117 to 137 (LLYHLCSWGIPLIVVVITKIP). Residues 138–156 (NMISDNGNQCRFKSPNYIK) are Extracellular-facing. Residues 157-177 (FYLETILFIAFMLFNFIVAFI) form a helical membrane-spanning segment. Residues 178 to 213 (TIKHIISGNLRESETTTTSVLFVNEKKITTKKIVWR) are Cytoplasmic-facing. The chain crosses the membrane as a helical span at residues 214–234 (LLLYPSILSICYIMTLVLSIY). Topologically, residues 235-274 (QFSTESYGSGGAYANSINNKRNDKNTESGNSNNNNNSYIE) are extracellular. Asparagine 269 carries N-linked (GlcNAc...) asparagine glycosylation. A helical membrane pass occupies residues 275-295 (ILLYISKAIFLLQGFFNALVY). At 296-330 (LRSSKLRDRYKKITIFRKIFWRDEADYQSINDGFN) the chain is on the cytoplasmic side.

This sequence belongs to the G-protein coupled receptor 5 family.

It is found in the membrane. Receptor for cAMP. In Dictyostelium discoideum (Social amoeba), this protein is Cyclic AMP receptor-like protein E (crlE).